We begin with the raw amino-acid sequence, 178 residues long: Translation initiation factor IF-3 (178 aa).

This sequence belongs to the IF-3 family. As to quaternary structure, monomer.

It is found in the cytoplasm. IF-3 binds to the 30S ribosomal subunit and shifts the equilibrium between 70S ribosomes and their 50S and 30S subunits in favor of the free subunits, thus enhancing the availability of 30S subunits on which protein synthesis initiation begins. The protein is Translation initiation factor IF-3 of Ralstonia nicotianae (strain ATCC BAA-1114 / GMI1000) (Ralstonia solanacearum).